A 460-amino-acid chain; its full sequence is MDSKQSSELVFTVRRQKPELIAPAKPTPREIKFLSDIDDQEGLRFQIPVIQFYHKDSSMGRKDPVKVIKKAIAETLVFYYPFAGRLREGNGRKLMVDCTGEGIMFVEADADVTLEQFGDELQPPFPCLEELLYDVPDSAGVLNCPLLLIQVTRLRCGGFIFALRLNHTMSDAPGLVQFMTAVGEMARGASAPSILPVWCRELLNARNPPQVTCTHHEYDEVRDTKGTIIPLDDMVHKSFFFGPSEVSALRRFVPHHLRKCSTFELLTAVLWRCRTMSLKPDPEEEVRALCIVNARSRFNPPLPTGYYGNAFAFPVAVTTAAKLSKNPLGYALELVKKTKSDVTEEYMKSVADLMVLKGRPHFTVVRTFLVSDVTRGGFGEVDFGWGKAVYGGPAKGGVGAIPGVASFYIPFKNKKGENGIVVPICLPGFAMETFVKELDGMLKVDAPLDNSNYAIIRPAL.

Residues His-167 and Asp-382 each act as proton acceptor in the active site.

This sequence belongs to the plant acyltransferase family.

The enzyme catalyses benzyl alcohol + benzoyl-CoA = benzyl benzoate + CoA. Functionally, probably involved in the formation of volatile ester benzylbenzoate. This Nicotiana tabacum (Common tobacco) protein is Benzyl alcohol O-benzoyltransferase (HSR201).